Reading from the N-terminus, the 502-residue chain is Cytochrome P450 81D1 (502 aa).

Residues 6–26 (IRVVLYSIFSLIFLIISFKFL) form a helical membrane-spanning segment. Cys440 contacts heme.

Belongs to the cytochrome P450 family. It depends on heme as a cofactor.

Its subcellular location is the membrane. The chain is Cytochrome P450 81D1 (CYP81D1) from Arabidopsis thaliana (Mouse-ear cress).